The sequence spans 335 residues: Avermitilol synthase (335 aa).

Positions 80, 84, 219, 223, and 227 each coordinate Mg(2+). A DDXXD motif motif is present at residues Asp80–Asp84.

Belongs to the terpene synthase family. It depends on Mg(2+) as a cofactor.

It carries out the reaction (2E,6E)-farnesyl diphosphate + H2O = avermitilol + diphosphate. Functionally, catalyzes the cyclization of farnesyl diphosphate to avermitilol. The protein is Avermitilol synthase (tpc1) of Streptomyces avermitilis (strain ATCC 31267 / DSM 46492 / JCM 5070 / NBRC 14893 / NCIMB 12804 / NRRL 8165 / MA-4680).